We begin with the raw amino-acid sequence, 188 residues long: C-type lectin domain family 5 member A (188 aa).

Topologically, residues 1–4 are cytoplasmic; the sequence is MNWH. Residues 5 to 27 form a helical; Signal-anchor for type II membrane protein membrane-spanning segment; that stretch reads MIISGLIVVVLKVVGMTLFLLYF. Residues 28–188 lie on the Extracellular side of the membrane; it reads PQIFNKSNDG…YRRICEKNAK (161 aa). Asn-32 is a glycosylation site (N-linked (GlcNAc...) asparagine). A disulfide bridge connects residues Cys-71 and Cys-82. One can recognise a C-type lectin domain in the interval 78–184; that stretch reads YQARCFFLST…CDISYRRICE (107 aa). Residues Asn-93, Asn-144, and Asn-151 are each glycosylated (N-linked (GlcNAc...) asparagine). Disulfide bonds link Cys-99-Cys-183 and Cys-161-Cys-175.

In terms of assembly, monomer. Homodimer. The majority of CLEC5A is expressed as a monomeric form on macrophages. Interacts with TYROBP/DAP12. The interaction with TYROBP is required for CLEC5A cell surface expression. Interacts with HCST/DAP10. Forms a CLEC5A/TYROBP/HCST trimolecular complex depending almost solely on TYROBP. (Microbial infection) Interacts with dengue virus envelope protein E. In terms of processing, N-glycosylated. Contains sialic acid residues. Highly expressed in bone marrow with lower levels in synovium, lung and bronchus. Expressed in peripheral blood monocytes and in the monocyte/macrophage cell lines U-937 and Mono-Mac-6, but not in cell lines of other origins. Expression is down-regulated when monocytes differentiate into dendritic cells.

Its subcellular location is the cell membrane. Its function is as follows. Functions as a positive regulator of osteoclastogenesis. Cell surface receptor that signals via TYROBP. Regulates inflammatory responses. In terms of biological role, (Microbial infection) Critical macrophage receptor for dengue virus serotypes 1-4. The binding of dengue virus to CLEC5A triggers signaling through the phosphorylation of TYROBP. This interaction does not result in viral entry, but stimulates pro-inflammatory cytokine release. The chain is C-type lectin domain family 5 member A (CLEC5A) from Homo sapiens (Human).